The following is a 27-amino-acid chain: Dermaseptin-S4 (27 aa).

It belongs to the frog skin active peptide (FSAP) family. Dermaseptin subfamily. As to quaternary structure, monomer and oligomer. Forms aggregates in aqueous environments. As to expression, expressed by the skin glands.

The protein localises to the secreted. Its function is as follows. Potent antimicrobial peptide with activity against bacteria and protozoa. Also has activity against fungi. Also shows activity against enveloped herpes simplex virus type 1. Probably acts by disturbing membrane functions with its amphipathic structure. Binds to healthy erythrocytes (this binding is receptor independent), and has strong hemolytic activity. Does not bind to P.falciparum infected erythrocytes, but accumulates within the parasite. Kills the parasite, and only at high concentrations has a hemolytic activity on the host cell. In vitro, shows high spermicidal activities. This chain is Dermaseptin-S4, found in Phyllomedusa sauvagei (Sauvage's leaf frog).